We begin with the raw amino-acid sequence, 190 residues long: Large ribosomal subunit protein uL6 (190 aa).

The protein belongs to the universal ribosomal protein uL6 family.

This is Large ribosomal subunit protein uL6 (RpL9) from Drosophila melanogaster (Fruit fly).